The primary structure comprises 199 residues: Recombination protein RecR (199 aa).

The segment at 58–73 (CKTCGNIDTQSPCTVC) adopts a C4-type zinc-finger fold. One can recognise a Toprim domain in the interval 81–176 (AMIVVVADVA…KVTRLAHGVP (96 aa)).

This sequence belongs to the RecR family.

In terms of biological role, may play a role in DNA repair. It seems to be involved in an RecBC-independent recombinational process of DNA repair. It may act with RecF and RecO. In Bradyrhizobium sp. (strain ORS 278), this protein is Recombination protein RecR.